We begin with the raw amino-acid sequence, 350 residues long: Nicotinate-nucleotide--dimethylbenzimidazole phosphoribosyltransferase (350 aa).

The Proton acceptor role is filled by E318.

This sequence belongs to the CobT family.

It catalyses the reaction 5,6-dimethylbenzimidazole + nicotinate beta-D-ribonucleotide = alpha-ribazole 5'-phosphate + nicotinate + H(+). Its pathway is nucleoside biosynthesis; alpha-ribazole biosynthesis; alpha-ribazole from 5,6-dimethylbenzimidazole: step 1/2. Functionally, catalyzes the synthesis of alpha-ribazole-5'-phosphate from nicotinate mononucleotide (NAMN) and 5,6-dimethylbenzimidazole (DMB). The polypeptide is Nicotinate-nucleotide--dimethylbenzimidazole phosphoribosyltransferase (Citrifermentans bemidjiense (strain ATCC BAA-1014 / DSM 16622 / JCM 12645 / Bem) (Geobacter bemidjiensis)).